Here is a 171-residue protein sequence, read N- to C-terminus: Sec-independent protein translocase protein TatB (171 aa).

A helical membrane pass occupies residues 1–21; the sequence is MFDIGFSELLLVFIIGLVVLG. Positions 117–171 are disordered; sequence KDNEAAHEGVTPAAAQTQASSPEQKPETTPEPVVKPAADAEPKTAAPSPSSSDKP. The segment covering 130-139 has biased composition (polar residues); sequence AAQTQASSPE.

It belongs to the TatB family. As to quaternary structure, the Tat system comprises two distinct complexes: a TatABC complex, containing multiple copies of TatA, TatB and TatC subunits, and a separate TatA complex, containing only TatA subunits. Substrates initially bind to the TatABC complex, which probably triggers association of the separate TatA complex to form the active translocon.

It is found in the cell inner membrane. Functionally, part of the twin-arginine translocation (Tat) system that transports large folded proteins containing a characteristic twin-arginine motif in their signal peptide across membranes. Together with TatC, TatB is part of a receptor directly interacting with Tat signal peptides. TatB may form an oligomeric binding site that transiently accommodates folded Tat precursor proteins before their translocation. The chain is Sec-independent protein translocase protein TatB from Escherichia coli O157:H7.